The sequence spans 425 residues: Serine--tRNA ligase (425 aa).

231–233 (TAE) contacts L-serine. Residues 262–264 (RTE) and V278 each bind ATP. E285 is a binding site for L-serine. 349–352 (EVTS) contacts ATP. T384 is an L-serine binding site.

The protein belongs to the class-II aminoacyl-tRNA synthetase family. Type-1 seryl-tRNA synthetase subfamily. As to quaternary structure, homodimer. The tRNA molecule binds across the dimer.

The protein resides in the cytoplasm. The enzyme catalyses tRNA(Ser) + L-serine + ATP = L-seryl-tRNA(Ser) + AMP + diphosphate + H(+). The catalysed reaction is tRNA(Sec) + L-serine + ATP = L-seryl-tRNA(Sec) + AMP + diphosphate + H(+). It functions in the pathway aminoacyl-tRNA biosynthesis; selenocysteinyl-tRNA(Sec) biosynthesis; L-seryl-tRNA(Sec) from L-serine and tRNA(Sec): step 1/1. Functionally, catalyzes the attachment of serine to tRNA(Ser). Is also able to aminoacylate tRNA(Sec) with serine, to form the misacylated tRNA L-seryl-tRNA(Sec), which will be further converted into selenocysteinyl-tRNA(Sec). This Dictyoglomus turgidum (strain DSM 6724 / Z-1310) protein is Serine--tRNA ligase.